A 279-amino-acid chain; its full sequence is Small ribosomal subunit protein uS2 (279 aa).

It belongs to the universal ribosomal protein uS2 family. Component of the small ribosomal subunit. Mature ribosomes consist of a small (40S) and a large (60S) subunit. The 40S subunit contains about 33 different proteins and 1 molecule of RNA (18S). The 60S subunit contains about 49 different proteins and 3 molecules of RNA (28S, 5.8S and 5S). Interacts with ribosomal protein S21.

The protein resides in the cytoplasm. In terms of biological role, required for the assembly and/or stability of the 40S ribosomal subunit. Required for the processing of the 20S rRNA-precursor to mature 18S rRNA in a late step of the maturation of 40S ribosomal subunits. The polypeptide is Small ribosomal subunit protein uS2 (Schistosoma japonicum (Blood fluke)).